The sequence spans 317 residues: Aspartate carbamoyltransferase catalytic subunit (317 aa).

Residues Arg66 and Thr67 each coordinate carbamoyl phosphate. Lys94 is a binding site for L-aspartate. The carbamoyl phosphate site is built by Arg116, His144, and Gln147. Positions 177 and 231 each coordinate L-aspartate. Carbamoyl phosphate-binding residues include Gly272 and Pro273.

It belongs to the aspartate/ornithine carbamoyltransferase superfamily. ATCase family. Heterododecamer (2C3:3R2) of six catalytic PyrB chains organized as two trimers (C3), and six regulatory PyrI chains organized as three dimers (R2).

It catalyses the reaction carbamoyl phosphate + L-aspartate = N-carbamoyl-L-aspartate + phosphate + H(+). Its pathway is pyrimidine metabolism; UMP biosynthesis via de novo pathway; (S)-dihydroorotate from bicarbonate: step 2/3. Its function is as follows. Catalyzes the condensation of carbamoyl phosphate and aspartate to form carbamoyl aspartate and inorganic phosphate, the committed step in the de novo pyrimidine nucleotide biosynthesis pathway. In Rhodopseudomonas palustris (strain BisB5), this protein is Aspartate carbamoyltransferase catalytic subunit.